A 321-amino-acid polypeptide reads, in one-letter code: WD repeat-containing protein VIP3 (321 aa).

WD repeat units lie at residues 12-55 (AHED…LVRT), 58-97 (GHSL…TIAV), 100-140 (APPS…LIST), 156-195 (SSKK…LLHQ), 198-238 (GHNM…LLGS), 241-280 (GHTS…AIQT), and 283-319 (NHND…SLYD).

As to quaternary structure, component of the nuclear PAF1 complex (PAF1C), which consists of VIP2/ELF7/PAF1, VIP3/SKI8/WDR61, VIP4/LEO1, VIP5/RTF1, VIP6/ELF8/CTR9 and CDC73. Component of the cytoplasmic SKI complex, which consists of SKI2, SKI3 and VIP3/SKI8. Interacts with VIP4 and VIP6.

The protein resides in the nucleus. It is found in the cytoplasm. Functionally, component of the PAF1 complex (PAF1C) which is involved in histone modifications such as methylation on histone H3 'Lys-4' (H3K4me3). Involved in regulation of flowering time. Required for the expression of the flowering repressor and MADS box gene FLC. Required for histone H3 trimethylation on 'Lys-4' (H3K4me3) and histone dimethylation on 'Lys-36' (H3K36me2) at the FLC locus. Prevents trimethylation on 'Lys-27' (H3K27me3) at the same locus. Not required for meiotic recombination or progression. Component of the SKI complex which is thought to be involved in exosome-mediated RNA decay and associates with transcriptionally active genes in a manner dependent on PAF1 complex (PAF1C). Required for proper progression of cell differentiation process. The sequence is that of WD repeat-containing protein VIP3 from Arabidopsis thaliana (Mouse-ear cress).